The sequence spans 394 residues: 4-hydroxyphenylpyruvate dioxygenase (394 aa).

VOC domains follow at residues 27 to 161 and 193 to 351; these read GYDH…LIER and HIDH…LFTK. Fe cation contacts are provided by His196, His279, and Glu362.

Belongs to the 4HPPD family. It depends on Fe cation as a cofactor.

The enzyme catalyses 3-(4-hydroxyphenyl)pyruvate + O2 = homogentisate + CO2. Its pathway is amino-acid degradation; L-phenylalanine degradation; acetoacetate and fumarate from L-phenylalanine: step 3/6. This is 4-hydroxyphenylpyruvate dioxygenase from Yarrowia lipolytica (strain CLIB 122 / E 150) (Yeast).